Consider the following 222-residue polypeptide: uncharacterized protein (222 aa).

The disordered stretch occupies residues 142–222 (ARRGGCVHPP…LPDPPSAGHL (81 aa)). The span at 160–169 (QSRSISSRRA) shows a compositional bias: low complexity. The span at 182–196 (PRRRPHRHRTRPQTR) shows a compositional bias: basic residues.

It belongs to the Rv1128c/1148c/1588c/1702c/1945/3466 family.

This is an uncharacterized protein from Mycobacterium tuberculosis (strain CDC 1551 / Oshkosh).